The primary structure comprises 181 residues: Protein GrpE (181 aa).

Residues 1 to 13 (MENTQENPATQSA) show a composition bias toward polar residues. Residues 1–34 (MENTQENPATQSAEDIGSAKQAAQGAAPAAEAAD) form a disordered region. The span at 19-34 (AKQAAQGAAPAAEAAD) shows a compositional bias: low complexity.

Belongs to the GrpE family. Homodimer.

It localises to the cytoplasm. Functionally, participates actively in the response to hyperosmotic and heat shock by preventing the aggregation of stress-denatured proteins, in association with DnaK and GrpE. It is the nucleotide exchange factor for DnaK and may function as a thermosensor. Unfolded proteins bind initially to DnaJ; upon interaction with the DnaJ-bound protein, DnaK hydrolyzes its bound ATP, resulting in the formation of a stable complex. GrpE releases ADP from DnaK; ATP binding to DnaK triggers the release of the substrate protein, thus completing the reaction cycle. Several rounds of ATP-dependent interactions between DnaJ, DnaK and GrpE are required for fully efficient folding. This chain is Protein GrpE, found in Burkholderia vietnamiensis (strain G4 / LMG 22486) (Burkholderia cepacia (strain R1808)).